The primary structure comprises 428 residues: 3-phosphoshikimate 1-carboxyvinyltransferase (428 aa).

3 residues coordinate 3-phosphoshikimate: Lys20, Ser21, and Arg25. Phosphoenolpyruvate is bound at residue Lys20. 2 residues coordinate phosphoenolpyruvate: Gly92 and Arg120. 3-phosphoshikimate is bound by residues Ser166, Gln168, Asp314, and Lys341. Gln168 provides a ligand contact to phosphoenolpyruvate. Asp314 acts as the Proton acceptor in catalysis. Phosphoenolpyruvate-binding residues include Arg345 and Arg387.

The protein belongs to the EPSP synthase family. Monomer.

It localises to the cytoplasm. The enzyme catalyses 3-phosphoshikimate + phosphoenolpyruvate = 5-O-(1-carboxyvinyl)-3-phosphoshikimate + phosphate. Its pathway is metabolic intermediate biosynthesis; chorismate biosynthesis; chorismate from D-erythrose 4-phosphate and phosphoenolpyruvate: step 6/7. Its function is as follows. Catalyzes the transfer of the enolpyruvyl moiety of phosphoenolpyruvate (PEP) to the 5-hydroxyl of shikimate-3-phosphate (S3P) to produce enolpyruvyl shikimate-3-phosphate and inorganic phosphate. This Listeria innocua serovar 6a (strain ATCC BAA-680 / CLIP 11262) protein is 3-phosphoshikimate 1-carboxyvinyltransferase.